The primary structure comprises 140 residues: VapC ribonuclease Y4jK (140 aa).

Residues 2 to 135 form the PINc domain; that stretch reads IVLDTNVISE…FEAAGLDIIN (134 aa). Residues aspartate 5 and aspartate 104 each contribute to the Mg(2+) site.

It belongs to the PINc/VapC protein family. Mg(2+) is required as a cofactor.

In terms of biological role, toxic component of a type II toxin-antitoxin (TA) system. An RNase. Involved in plasmid stability. The polypeptide is VapC ribonuclease Y4jK (Sinorhizobium fredii (strain NBRC 101917 / NGR234)).